The chain runs to 420 residues: O-methyltransferase penK (420 aa).

Position 285 (aspartate 285) interacts with S-adenosyl-L-methionine. Residue histidine 325 is the Proton acceptor of the active site.

It belongs to the class I-like SAM-binding methyltransferase superfamily. Cation-independent O-methyltransferase family.

It functions in the pathway secondary metabolite biosynthesis. Its pathway is alkaloid biosynthesis. The protein operates within mycotoxin biosynthesis. O-methyltransferase; part of the gene cluster that mediates the biosynthesis of penigequinolones, potent insecticidal alkaloids that contain a highly modified 10-carbon prenyl group. The first stage is catalyzed by the nonribosomal peptide synthetase penN that condenses anthranilic acid and O-methyl-L-tyrosine to produce 4'-methoxycyclopeptin. 4'-methoxycyclopeptin is then converted to 4'-methoxydehydrocyclopeptin by the ketoglutarate-dependent dioxygenase penM through dehydrogenation to form a double bond between C-alpha and C-beta of the O-methyltyrosine side chain. PenM also converts its first product methoxydehydrocyclopeptin to 4'-methoxycyclopenin. The following conversion of 4'methoxycyclopenin into 4'-methoxyviridicatin is catalyzed by the cyclopenase penL. 4'-methoxyviridicatin is the precursor of quinolone natural products, and is further converted to quinolinone B. The prenyltransferase penI then catalyzes the canonical Friedel-Crafts alkylation of quinolinone B with dimethylallyl cation to yield dimethylallyl quinolone, which is subjected to FAD-dependent dehydrogenation by the FAD-linked oxidoreductase penH to yield conjugated aryl diene. The delta(3') double bond then serves as the site of the second alkylation with DMAPP catalyzed by the prenyltransferase penG to yield a carbenium ion intermediate, which can be attacked by H(2)O to yield a styrenyl quinolone containing a C3'-hydroxyprenyl chain, or undergo cyclization to yield yaequinolones J1 and J2. The conversion of the styrenyl quinolone into the tetrahydrofuran-containing yaequinolone C is performed by the FAD-dependent monooxygenase penE and involves epoxidation of the terminal C7'-C8' olefin, followed by epoxide ring opening initiated by the C3' hydroxyl group. The predicted cysteine hydrolase penJ acts as an epoxide hydrolase that enhances the rate of the 5-exo-tet cyclization step, increasing the yield of yaequinolone C. PenF catalyzes the cationic rearrangement of the epoxide formed by penE (before ring opening to produce yaequinolone C) into yaequinolone D. Finally, the short-chain dehydrogenase/reductase (SDR)-like reductase penD, catalyzes both the dehydration of yaequinolone D and the reduction of the resulting oxonium to yield penigequinolone. This is O-methyltransferase penK from Penicillium thymicola.